The chain runs to 142 residues: Hemoglobin subunit alpha (142 aa).

Residues 2–142 (VLSPADKSNV…VSTVLTSKYR (141 aa)) enclose the Globin domain. Serine 4 carries the post-translational modification Phosphoserine. Lysine 8 and lysine 12 each carry N6-succinyllysine. Position 17 is an N6-acetyllysine; alternate (lysine 17). Lysine 17 carries the post-translational modification N6-succinyllysine; alternate. Tyrosine 25 bears the Phosphotyrosine mark. The residue at position 36 (serine 36) is a Phosphoserine. Lysine 41 is modified (N6-succinyllysine). Serine 50 bears the Phosphoserine mark. Histidine 59 serves as a coordination point for O2. Histidine 88 is a heme b binding site. Residue serine 103 is modified to Phosphoserine. At threonine 109 the chain carries Phosphothreonine. The residue at position 125 (serine 125) is a Phosphoserine. Phosphothreonine occurs at positions 135 and 138. Serine 139 carries the post-translational modification Phosphoserine.

It belongs to the globin family. In terms of assembly, heterotetramer of two alpha chains and two beta chains. In terms of tissue distribution, red blood cells.

In terms of biological role, involved in oxygen transport from the lung to the various peripheral tissues. Hemopressin acts as an antagonist peptide of the cannabinoid receptor CNR1. Hemopressin-binding efficiently blocks cannabinoid receptor CNR1 and subsequent signaling. The chain is Hemoglobin subunit alpha (HBA) from Ursus maritimus (Polar bear).